The chain runs to 406 residues: Phosphatidylinositol 5-phosphate 4-kinase type-2 alpha (406 aa).

N-acetylalanine is present on Ala2. Position 3 is a phosphothreonine (Thr3). The residue at position 14 (Ser14) is a Phosphoserine. The PIPK domain maps to 33-405 (ASDPLLSVLM…RFLDFIGHIL (373 aa)). The interval 59 to 65 (VMLMPDD) is required for interaction with PIP5K1A. N6-acetyllysine occurs at positions 89 and 145. Residues 287 to 328 (EQEEVECEENEGEEEGESDGAHPIGTPPDSPGNTLNSSPPLA) are disordered. A compositionally biased stretch (acidic residues) spans 289-304 (EEVECEENEGEEEGES).

As to quaternary structure, homodimer. Interacts with PIP4K2B; the interaction may regulate localization to the nucleus. Probably interacts with PIP5K1A; the interaction inhibits PIP5K1A kinase activity. Post-translationally, phosphorylated in tyrosines. Phosphorylation is induced by light and increases kinase activity.

The protein resides in the cell membrane. It localises to the nucleus. The protein localises to the lysosome. It is found in the cytoplasm. Its subcellular location is the photoreceptor inner segment. The protein resides in the cell projection. It localises to the cilium. The protein localises to the photoreceptor outer segment. The catalysed reaction is a 1,2-diacyl-sn-glycero-3-phospho-(1D-myo-inositol-5-phosphate) + ATP = a 1,2-diacyl-sn-glycero-3-phospho-(1D-myo-inositol-4,5-bisphosphate) + ADP + H(+). The enzyme catalyses 1,2-dihexadecanoyl-sn-glycero-3-phospho-(1D-myo-inositol-5-phosphate) + ATP = 1,2-dihexadecanoyl-sn-glycero-3-phospho-(1D-myo-inositol-4,5-bisphosphate) + ADP + H(+). It catalyses the reaction 1,2-dihexadecanoyl-sn-glycero-3-phospho-(1D-myo-inositol-5-phosphate) + GTP = 1,2-dihexadecanoyl-sn-glycero-3-phospho-(1D-myo-inositol-4,5-bisphosphate) + GDP + H(+). Its activity is regulated as follows. In rod outer segments, activated by light. Functionally, catalyzes the phosphorylation of phosphatidylinositol 5-phosphate (PtdIns5P) on the fourth hydroxyl of the myo-inositol ring, to form phosphatidylinositol 4,5-bisphosphate (PtdIns(4,5)P2). Has both ATP- and GTP-dependent kinase activities. May exert its function by regulating the levels of PtdIns5P, which functions in the cytosol by increasing AKT activity and in the nucleus signals through ING2. May regulate the pool of cytosolic PtdIns5P in response to the activation of tyrosine phosphorylation. Required for lysosome-peroxisome membrane contacts and intracellular cholesterol transport through modulating peroxisomal PtdIns(4,5)P2 level. In collaboration with PIP4K2B, has a role in mediating autophagy in times of nutrient stress. Required for autophagosome-lysosome fusion and the regulation of cellular lipid metabolism. Negatively regulates insulin signaling through a catalytic-independent mechanism. PIP4Ks interact with PIP5Ks and suppress PIP5K-mediated PtdIns(4,5)P2 synthesis and insulin-dependent conversion to PtdIns(3,4,5)P3. May be involved in thrombopoiesis, and the terminal maturation of megakaryocytes and regulation of their size. The chain is Phosphatidylinositol 5-phosphate 4-kinase type-2 alpha from Rattus norvegicus (Rat).